We begin with the raw amino-acid sequence, 321 residues long: Malate dehydrogenase (321 aa).

Residues 10–15 (GSGMIG) and aspartate 34 each bind NAD(+). Substrate-binding residues include arginine 83 and arginine 89. Residues asparagine 96 and 119 to 121 (ITN) contribute to the NAD(+) site. Residues asparagine 121 and arginine 152 each contribute to the substrate site. Histidine 176 acts as the Proton acceptor in catalysis.

This sequence belongs to the LDH/MDH superfamily. MDH type 3 family.

The enzyme catalyses (S)-malate + NAD(+) = oxaloacetate + NADH + H(+). Catalyzes the reversible oxidation of malate to oxaloacetate. The protein is Malate dehydrogenase of Bartonella bacilliformis (strain ATCC 35685 / KC583 / Herrer 020/F12,63).